We begin with the raw amino-acid sequence, 409 residues long: Wadjet protein JetD (409 aa).

In terms of biological role, component of antiplasmid transformation system Wadjet type I, composed of JetA, JetB, JetC and JetD. Expression of Wadjet type I in B.subtilis (strain BEST7003) reduces the transformation efficiency of plasmid pHCMC05. The sequence is that of Wadjet protein JetD from Bacillus cereus (strain Q1).